A 553-amino-acid chain; its full sequence is RNA exonuclease 1 (553 aa).

S24 is subject to Phosphoserine. A coiled-coil region spans residues 167–194 (MEKINKLKELQKKKKITINDLVLSEQQL). The 149-residue stretch at 225–373 (IFALDCEMCL…EDARACLELT (149 aa)) folds into the Exonuclease domain. The stretch at 509 to 533 (WNNLSTELEFIQDKKERLDKRRERE) forms a coiled coil.

It belongs to the REXO1/REXO3 family.

Its subcellular location is the nucleus. In terms of biological role, 3' exoribonuclease required for 5S rRNA maturation and for the proper maturation of the 5' cistron of the tRNA-Arg3 dicistronic gene. Involved with REX2 in the maturation of the 5.8S rRNA, and with REX2 and REX3, in the 3' processing of the U5L snRNA. The polypeptide is RNA exonuclease 1 (RNH70) (Saccharomyces cerevisiae (strain ATCC 204508 / S288c) (Baker's yeast)).